The chain runs to 1042 residues: Signal-induced proliferation-associated protein 1 (1042 aa).

Disordered stretches follow at residues Met1 to Arg87 and Ser132 to Ala153. Thr64 bears the Phosphothreonine mark. Ser67 carries the phosphoserine modification. A compositionally biased stretch (polar residues) spans Gly134–Leu146. Phosphoserine is present on residues Ser182, Ser304, and Ser314. The 219-residue stretch at Leu321–Leu539 folds into the Rap-GAP domain. One can recognise a PDZ domain in the interval Glu687–Glu763. Phosphoserine is present on residues Ser817, Ser839, and Ser912. The tract at residues Glu830–Leu903 is disordered. Over residues Leu832 to Ser845 the composition is skewed to low complexity. The interval Leu946–His980 is disordered. A compositionally biased stretch (basic and acidic residues) spans Gly957–Ala967. Residues Gly972–Leu1034 adopt a coiled-coil conformation.

In terms of assembly, interacts with RRP1B; the interaction leads to inhibition of SIPA1 GTPase activity. As to expression, expressed in fetal as well as in adult tissues. Expressed abundantly in the lymphoid tissues such as thymus, spleen and peripheral blood lymphocytes and also shows a significant expression in the spinal cord.

The protein localises to the nucleus. Its subcellular location is the cytoplasm. The protein resides in the perinuclear region. It localises to the endomembrane system. Its function is as follows. GTPase activator for the nuclear Ras-related regulatory proteins Rap1 and Rap2 in vitro, converting them to the putatively inactive GDP-bound state. Affects cell cycle progression. The polypeptide is Signal-induced proliferation-associated protein 1 (SIPA1) (Homo sapiens (Human)).